Reading from the N-terminus, the 431-residue chain is Serine hydroxymethyltransferase (431 aa).

A (6S)-5,6,7,8-tetrahydrofolate-binding site is contributed by 121 to 123; the sequence is AHV. An N6-(pyridoxal phosphate)lysine modification is found at Lys227.

Belongs to the SHMT family. As to quaternary structure, homodimer. It depends on pyridoxal 5'-phosphate as a cofactor.

The protein localises to the cytoplasm. It functions in the pathway amino-acid biosynthesis; glycine biosynthesis; glycine from L-serine: step 1/1. Functionally, catalyzes the reversible interconversion of serine and glycine with a modified folate serving as the one-carbon carrier. Also exhibits a pteridine-independent aldolase activity toward beta-hydroxyamino acids, producing glycine and aldehydes, via a retro-aldol mechanism. This Metallosphaera sedula (strain ATCC 51363 / DSM 5348 / JCM 9185 / NBRC 15509 / TH2) protein is Serine hydroxymethyltransferase.